A 356-amino-acid chain; its full sequence is Probable dual-specificity RNA methyltransferase RlmN (356 aa).

Catalysis depends on glutamate 92, which acts as the Proton acceptor. The Radical SAM core domain maps to 98–336 (HKYGFSVCVT…CGVRLEHGTD (239 aa)). Cysteine 105 and cysteine 341 form a disulfide bridge. The [4Fe-4S] cluster site is built by cysteine 112, cysteine 116, and cysteine 119. S-adenosyl-L-methionine contacts are provided by residues 164–165 (GE), serine 196, 219–221 (SLH), and asparagine 297. Residue cysteine 341 is the S-methylcysteine intermediate of the active site.

This sequence belongs to the radical SAM superfamily. RlmN family. [4Fe-4S] cluster is required as a cofactor.

It localises to the cytoplasm. The enzyme catalyses adenosine(2503) in 23S rRNA + 2 reduced [2Fe-2S]-[ferredoxin] + 2 S-adenosyl-L-methionine = 2-methyladenosine(2503) in 23S rRNA + 5'-deoxyadenosine + L-methionine + 2 oxidized [2Fe-2S]-[ferredoxin] + S-adenosyl-L-homocysteine. It catalyses the reaction adenosine(37) in tRNA + 2 reduced [2Fe-2S]-[ferredoxin] + 2 S-adenosyl-L-methionine = 2-methyladenosine(37) in tRNA + 5'-deoxyadenosine + L-methionine + 2 oxidized [2Fe-2S]-[ferredoxin] + S-adenosyl-L-homocysteine. In terms of biological role, specifically methylates position 2 of adenine 2503 in 23S rRNA and position 2 of adenine 37 in tRNAs. This chain is Probable dual-specificity RNA methyltransferase RlmN, found in Shouchella clausii (strain KSM-K16) (Alkalihalobacillus clausii).